The following is a 274-amino-acid chain: Oxidized low-density lipoprotein receptor 1 (274 aa).

Basic and acidic residues predominate over residues 1–16 (MAVDDLKVKPMKDQPD). The disordered stretch occupies residues 1–25 (MAVDDLKVKPMKDQPDQKSNGKKPK). Topologically, residues 1-31 (MAVDDLKVKPMKDQPDQKSNGKKPKGLRFLS) are cytoplasmic. Residues 32 to 54 (SPWWCPAAVALGVLCLGSLMTII) form a helical; Signal-anchor for type II membrane protein membrane-spanning segment. Residues Cys36 and Cys46 are each lipidated (S-palmitoyl cysteine). The tract at residues 55 to 150 (MLGMQLLQVS…SGPCPEDWLW (96 aa)) is neck. Topologically, residues 55–274 (MLGMQLLQVS…QKKANLLRSE (220 aa)) are extracellular. N-linked (GlcNAc...) asparagine glycans are attached at residues Asn73 and Asn139. The stretch at 84–139 (QVLAQQQAEAASQESQRELKEMIETLAKRLDEKSKKQMELNHQYLNLQEALKRMDN) forms a coiled coil. Disulfide bonds link Cys144–Cys155, Cys172–Cys264, and Cys243–Cys256. The C-type lectin domain maps to 151–265 (HGKNCYLFSS…CILVAYSICQ (115 aa)).

As to quaternary structure, homodimer; disulfide-linked. May form a hexamer composed of 3 homodimers. Interacts with HSP70. N-glycosylated.

It is found in the cell membrane. It localises to the membrane raft. The protein localises to the secreted. In terms of biological role, receptor that mediates the recognition, internalization and degradation of oxidatively modified low density lipoprotein (oxLDL) by vascular endothelial cells. OxLDL is a marker of atherosclerosis that induces vascular endothelial cell activation and dysfunction, resulting in pro-inflammatory responses, pro-oxidative conditions and apoptosis. Its association with oxLDL induces the activation of NF-kappa-B through an increased production of intracellular reactive oxygen and a variety of pro-atherogenic cellular responses including a reduction of nitric oxide (NO) release, monocyte adhesion and apoptosis. In addition to binding oxLDL, it acts as a receptor for the HSP70 protein involved in antigen cross-presentation to naive T-cells in dendritic cells, thereby participating in cell-mediated antigen cross-presentation. Also involved in inflammatory process, by acting as a leukocyte-adhesion molecule at the vascular interface in endotoxin-induced inflammation. Also acts as a receptor for advanced glycation end (AGE) products, activated platelets, monocytes, apoptotic cells and both Gram-negative and Gram-positive bacteria. The polypeptide is Oxidized low-density lipoprotein receptor 1 (OLR1) (Oryctolagus cuniculus (Rabbit)).